Here is a 214-residue protein sequence, read N- to C-terminus: Protein PsaE (214 aa).

Residues 1–24 form the signal peptide; sequence MSHCVVLNKLESVLIIGDSRYALS. The ompR/PhoB-type DNA-binding region spans 1–94; sequence MSHCVVLNKL…YKNEGYSYQK (94 aa).

In terms of biological role, required for expression of pH 6 antigen. The sequence is that of Protein PsaE (psaE) from Yersinia pseudotuberculosis serotype I (strain IP32953).